Reading from the N-terminus, the 201-residue chain is MQIVFKATQRVEQGTGASRRLRRAGQIPGIIYGADTDAQAITVDHNELYHLLKKETFHASVLMIELEGAKHTVVLRDVQWHPYKQQVLHLDFQRIDAGHQLHLKVPLHFINNDTNPAVKLGGCMISHTMTELDIACLPANLPEFIEVDLQSLEAGQSIHVSQLKLPEGVEAVHHGEGDPVVATALTVKGGAAEATEGEVAA.

This sequence belongs to the bacterial ribosomal protein bL25 family. CTC subfamily. As to quaternary structure, part of the 50S ribosomal subunit; part of the 5S rRNA/L5/L18/L25 subcomplex. Contacts the 5S rRNA. Binds to the 5S rRNA independently of L5 and L18.

In terms of biological role, this is one of the proteins that binds to the 5S RNA in the ribosome where it forms part of the central protuberance. The sequence is that of Large ribosomal subunit protein bL25 from Aromatoleum aromaticum (strain DSM 19018 / LMG 30748 / EbN1) (Azoarcus sp. (strain EbN1)).